The sequence spans 338 residues: MAIKVGINGFGRIGRIVLRNALKNPEVEVVAVNDPFIDTEYAAYMFKYDSTHGRFKGKVEAKDGGLIIDGKHIQVFGERDPSNIPWGKAGADYVVESTGVFTGKEAASAHLKGGAKKVIISAPSGDAPMFVVGVNLDAYKPDMTVISNASCTTNCLAPLAKVVNDKYGIIEGLMTTVHSITATQKTVDGPSHKDWRGGRTASGNIIPSSTGAAKAVGKVIPELNGKLTGMSLRVPTVDVSVVDLTVRIKNGASYEDIKATMKAASESPELKGILGYTDEDVVSTDFIGDTHSSIFDAKAGIGLNDNFVKLISWYDNEYGYSARVVDLIVAVAKKDASA.

Residues 12 to 13 (RI), D34, and R79 each bind NAD(+). D-glyceraldehyde 3-phosphate contacts are provided by residues 150–152 (SCT), T181, 210–211 (TG), and R233. The Nucleophile role is filled by C151. NAD(+) is bound at residue N316.

Belongs to the glyceraldehyde-3-phosphate dehydrogenase family. As to quaternary structure, homotetramer.

It localises to the cytoplasm. The enzyme catalyses D-glyceraldehyde 3-phosphate + phosphate + NAD(+) = (2R)-3-phospho-glyceroyl phosphate + NADH + H(+). It functions in the pathway carbohydrate degradation; glycolysis; pyruvate from D-glyceraldehyde 3-phosphate: step 1/5. The sequence is that of Glyceraldehyde-3-phosphate dehydrogenase (GPD) from Yarrowia lipolytica (strain CLIB 122 / E 150) (Yeast).